The primary structure comprises 123 residues: uncharacterized protein (123 aa).

The N-terminal stretch at 1-20 (MSPLIVGTLIIILLSGLATA) is a signal peptide. Gly-96 carries GPI-anchor amidated glycine lipidation. Positions 97-123 (SSPTTKRVIYIVMILLVLITLAVNLKH) are cleaved as a propeptide — removed in mature form.

Its subcellular location is the cell membrane. This is an uncharacterized protein from Schizosaccharomyces pombe (strain 972 / ATCC 24843) (Fission yeast).